We begin with the raw amino-acid sequence, 324 residues long: ATP-dependent 6-phosphofructokinase (324 aa).

Glycine 11 provides a ligand contact to ATP. 21–25 (RAVVR) serves as a coordination point for ADP. ATP-binding positions include 72 to 73 (RE) and 102 to 105 (GNGS). Residue asparagine 103 coordinates Mg(2+). Residue 126–128 (TID) participates in substrate binding. Residue aspartate 128 is the Proton acceptor of the active site. Lysine 155 serves as a coordination point for ADP. Residues arginine 163 and 170 to 172 (MGR) each bind substrate. Residues 186–188 (GAE) and 214–216 (KNF) each bind ADP. Residues glutamate 223, arginine 248, and 254–257 (YIQR) contribute to the substrate site.

This sequence belongs to the phosphofructokinase type A (PFKA) family. ATP-dependent PFK group I subfamily. Prokaryotic clade 'B1' sub-subfamily. In terms of assembly, homotetramer. Mg(2+) serves as cofactor.

It localises to the cytoplasm. The catalysed reaction is beta-D-fructose 6-phosphate + ATP = beta-D-fructose 1,6-bisphosphate + ADP + H(+). It functions in the pathway carbohydrate degradation; glycolysis; D-glyceraldehyde 3-phosphate and glycerone phosphate from D-glucose: step 3/4. With respect to regulation, allosterically activated by ADP and other diphosphonucleosides, and allosterically inhibited by phosphoenolpyruvate. In terms of biological role, catalyzes the phosphorylation of D-fructose 6-phosphate to fructose 1,6-bisphosphate by ATP, the first committing step of glycolysis. The sequence is that of ATP-dependent 6-phosphofructokinase from Sulfurihydrogenibium sp. (strain YO3AOP1).